The chain runs to 107 residues: Ferredoxin 1 (107 aa).

2 4Fe-4S ferredoxin-type domains span residues Thr2 to Pro30 and Asn31 to Glu60. [3Fe-4S] cluster is bound by residues Cys9 and Cys17. Cys21, Cys40, Cys43, and Cys46 together coordinate [4Fe-4S] cluster. A [3Fe-4S] cluster-binding site is contributed by Cys50.

The cofactor is [4Fe-4S] cluster. [3Fe-4S] cluster is required as a cofactor.

Its function is as follows. Ferredoxins are iron-sulfur proteins that transfer electrons in a wide variety of metabolic reactions. This is Ferredoxin 1 (fdxA) from Pseudomonas putida (strain ATCC 47054 / DSM 6125 / CFBP 8728 / NCIMB 11950 / KT2440).